The chain runs to 274 residues: Dermonecrotic toxin SdSicTox-betaIIB2ii (274 aa).

His-5 is an active-site residue. The Mg(2+) site is built by Glu-25 and Asp-27. Catalysis depends on His-41, which acts as the Nucleophile. 2 disulfides stabilise this stretch: Cys-45–Cys-51 and Cys-47–Cys-190. Asp-85 is a binding site for Mg(2+).

Belongs to the arthropod phospholipase D family. Class II subfamily. The cofactor is Mg(2+). As to expression, expressed by the venom gland.

The protein resides in the secreted. The catalysed reaction is an N-(acyl)-sphingosylphosphocholine = an N-(acyl)-sphingosyl-1,3-cyclic phosphate + choline. It carries out the reaction an N-(acyl)-sphingosylphosphoethanolamine = an N-(acyl)-sphingosyl-1,3-cyclic phosphate + ethanolamine. It catalyses the reaction a 1-acyl-sn-glycero-3-phosphocholine = a 1-acyl-sn-glycero-2,3-cyclic phosphate + choline. The enzyme catalyses a 1-acyl-sn-glycero-3-phosphoethanolamine = a 1-acyl-sn-glycero-2,3-cyclic phosphate + ethanolamine. Dermonecrotic toxins cleave the phosphodiester linkage between the phosphate and headgroup of certain phospholipids (sphingolipid and lysolipid substrates), forming an alcohol (often choline) and a cyclic phosphate. This toxin acts on sphingomyelin (SM). It may also act on ceramide phosphoethanolamine (CPE), lysophosphatidylcholine (LPC) and lysophosphatidylethanolamine (LPE), but not on lysophosphatidylserine (LPS), and lysophosphatidylglycerol (LPG). It acts by transphosphatidylation, releasing exclusively cyclic phosphate products as second products. Induces dermonecrosis, hemolysis, increased vascular permeability, edema, inflammatory response, and platelet aggregation. The chain is Dermonecrotic toxin SdSicTox-betaIIB2ii from Sicarius cf. damarensis (strain GJB-2008) (Six-eyed sand spider).